The sequence spans 139 residues: Acidic phospholipase A2 4 (139 aa).

Residues 1 to 16 (MRTLWIVAVWLVGVEG) form the signal peptide. Intrachain disulfides connect Cys-42–Cys-131, Cys-44–Cys-60, Cys-59–Cys-111, Cys-65–Cys-139, Cys-66–Cys-104, Cys-73–Cys-97, and Cys-91–Cys-102. Residues Tyr-43, Gly-45, and Gly-47 each coordinate Ca(2+). His-63 is a catalytic residue. Asp-64 lines the Ca(2+) pocket. The active site involves Asp-105.

Belongs to the phospholipase A2 family. Group II subfamily. D49 sub-subfamily. It depends on Ca(2+) as a cofactor. In terms of tissue distribution, expressed by the venom gland.

The protein localises to the secreted. The catalysed reaction is a 1,2-diacyl-sn-glycero-3-phosphocholine + H2O = a 1-acyl-sn-glycero-3-phosphocholine + a fatty acid + H(+). Functionally, PLA2 catalyzes the calcium-dependent hydrolysis of the 2-acyl groups in 3-sn-phosphoglycerides. The protein is Acidic phospholipase A2 4 of Echis carinatus sochureki (Saw-scaled viper).